Consider the following 472-residue polypeptide: Glutamate-1-semialdehyde 2,1-aminomutase 2, chloroplastic (472 aa).

A chloroplast-targeting transit peptide spans 1–36; that stretch reads MAATLTGSGIALGFSCSAKFSKRASSSSNRRCIKMS. The residue at position 312 (Lys312) is an N6-(pyridoxal phosphate)lysine.

This sequence belongs to the class-III pyridoxal-phosphate-dependent aminotransferase family. HemL subfamily. In terms of assembly, homodimer. It depends on pyridoxal 5'-phosphate as a cofactor. As to expression, expressed in leaf primordia and shoot apical meristems (SAM).

The protein localises to the plastid. The protein resides in the chloroplast. It carries out the reaction (S)-4-amino-5-oxopentanoate = 5-aminolevulinate. The protein operates within porphyrin-containing compound metabolism; protoporphyrin-IX biosynthesis; 5-aminolevulinate from L-glutamyl-tRNA(Glu): step 2/2. It functions in the pathway porphyrin-containing compound metabolism; chlorophyll biosynthesis. Functionally, transaminase converting glutamate 1-semialdehyde (GSA) to 5-aminolevulinate (ALA). Involved in the biosynthesis of tetrapyrroles. This chain is Glutamate-1-semialdehyde 2,1-aminomutase 2, chloroplastic, found in Arabidopsis thaliana (Mouse-ear cress).